The chain runs to 320 residues: Chitinase 3 (320 aa).

The N-terminal stretch at 1 to 18 (MRALALAVVAMAVVAVRG) is a signal peptide. The Chitin-binding type-1 domain occupies 19–59 (EQCGSQAGGALCPNCLCCSQYGWCGSTSDYCGAGCQSQCSG). Intrachain disulfides connect Cys21-Cys36, Cys30-Cys42, Cys33-Cys61, Cys35-Cys49, Cys53-Cys57, Cys97-Cys159, Cys172-Cys180, and Cys279-Cys311. Glu141 acts as the Proton donor in catalysis.

It belongs to the glycosyl hydrolase 19 family. Chitinase class I subfamily. Expressed at low levels in roots, leaves, sheaths and meristems.

The catalysed reaction is Random endo-hydrolysis of N-acetyl-beta-D-glucosaminide (1-&gt;4)-beta-linkages in chitin and chitodextrins.. Its function is as follows. Hydrolyzes chitin and plays a role in defense against fungal pathogens containing chitin. Inhibits the growth of T.reesei fungus on plate assay. The polypeptide is Chitinase 3 (Cht3) (Oryza sativa subsp. japonica (Rice)).